The following is a 418-amino-acid chain: AP-3 complex subunit mu-1 (418 aa).

The region spanning 176–417 (NNEAYFDVIE…ITKAGKFQVR (242 aa)) is the MHD domain.

The protein belongs to the adaptor complexes medium subunit family. In terms of assembly, the AP-3 complex associates with the BLOC-1 complex.

It localises to the golgi apparatus. The protein resides in the cytoplasmic vesicle membrane. In terms of biological role, part of the AP-3 complex, an adaptor-related complex which is not clathrin-associated. The complex is associated with the Golgi region as well as more peripheral structures. It facilitates the budding of vesicles from the Golgi membrane and may be directly involved in trafficking to lysosomes. In concert with the BLOC-1 complex, AP-3 is required to target cargos into vesicles assembled at cell bodies for delivery into neurites and nerve terminals. This is AP-3 complex subunit mu-1 (AP3M1) from Gallus gallus (Chicken).